A 142-amino-acid polypeptide reads, in one-letter code: Small ribosomal subunit protein bS6 (142 aa).

Residues 110-133 (NKKPSHAKEKHEKTEHTHSHHTEE) are compositionally biased toward basic and acidic residues. The disordered stretch occupies residues 110 to 142 (NKKPSHAKEKHEKTEHTHSHHTEETESVGSHSK).

It belongs to the bacterial ribosomal protein bS6 family.

Functionally, binds together with bS18 to 16S ribosomal RNA. In Helicobacter pylori (strain Shi470), this protein is Small ribosomal subunit protein bS6.